A 273-amino-acid chain; its full sequence is Protein B4 (273 aa).

Positions 1–24 are disordered; sequence MAPKKAVAAPEGGNKENAAVKGSS. The region spanning 40–118 is the H15 domain; the sequence is SHPPTLSMVV…GATGRFKLAK (79 aa). The tract at residues 120-273 is disordered; sequence VKTTKAGKEN…AGKKGKKVTN (154 aa). Basic and acidic residues predominate over residues 154-256; it reads AKTEKEPKGE…KDVKAQKDST (103 aa). Tandem repeats lie at residues 189-198, 199-208, and 209-217. Positions 189–217 are 3 X 10 AA tandem repeats; it reads KEAKEVDKANKEAKEVDKANKEAKEVDKA. The span at 264–273 shows a compositional bias: basic residues; sequence AGKKGKKVTN.

This sequence belongs to the histone H1/H5 family. In terms of assembly, interacts with nap1l1.

The protein resides in the nucleus. It localises to the chromosome. The sequence is that of Protein B4 (b4) from Xenopus laevis (African clawed frog).